We begin with the raw amino-acid sequence, 194 residues long: Crossover junction endodeoxyribonuclease RuvC (194 aa).

Residues D8, E72, and D144 contribute to the active site. The Mg(2+) site is built by D8, E72, and D144.

The protein belongs to the RuvC family. As to quaternary structure, homodimer which binds Holliday junction (HJ) DNA. The HJ becomes 2-fold symmetrical on binding to RuvC with unstacked arms; it has a different conformation from HJ DNA in complex with RuvA. In the full resolvosome a probable DNA-RuvA(4)-RuvB(12)-RuvC(2) complex forms which resolves the HJ. The cofactor is Mg(2+).

It localises to the cytoplasm. The catalysed reaction is Endonucleolytic cleavage at a junction such as a reciprocal single-stranded crossover between two homologous DNA duplexes (Holliday junction).. In terms of biological role, the RuvA-RuvB-RuvC complex processes Holliday junction (HJ) DNA during genetic recombination and DNA repair. Endonuclease that resolves HJ intermediates. Cleaves cruciform DNA by making single-stranded nicks across the HJ at symmetrical positions within the homologous arms, yielding a 5'-phosphate and a 3'-hydroxyl group; requires a central core of homology in the junction. The consensus cleavage sequence is 5'-(A/T)TT(C/G)-3'. Cleavage occurs on the 3'-side of the TT dinucleotide at the point of strand exchange. HJ branch migration catalyzed by RuvA-RuvB allows RuvC to scan DNA until it finds its consensus sequence, where it cleaves and resolves the cruciform DNA. The sequence is that of Crossover junction endodeoxyribonuclease RuvC from Psychrobacter cryohalolentis (strain ATCC BAA-1226 / DSM 17306 / VKM B-2378 / K5).